A 179-amino-acid polypeptide reads, in one-letter code: Adenine phosphoribosyltransferase (179 aa).

The protein belongs to the purine/pyrimidine phosphoribosyltransferase family. As to quaternary structure, homodimer.

The protein resides in the cytoplasm. The catalysed reaction is AMP + diphosphate = 5-phospho-alpha-D-ribose 1-diphosphate + adenine. It functions in the pathway purine metabolism; AMP biosynthesis via salvage pathway; AMP from adenine: step 1/1. Its function is as follows. Catalyzes a salvage reaction resulting in the formation of AMP, that is energically less costly than de novo synthesis. This chain is Adenine phosphoribosyltransferase, found in Actinobacillus pleuropneumoniae serotype 5b (strain L20).